The primary structure comprises 430 residues: Glutamate-1-semialdehyde 2,1-aminomutase 2 (430 aa).

K269 carries the post-translational modification N6-(pyridoxal phosphate)lysine.

It belongs to the class-III pyridoxal-phosphate-dependent aminotransferase family. HemL subfamily. Homodimer. Pyridoxal 5'-phosphate is required as a cofactor.

The protein localises to the cytoplasm. The catalysed reaction is (S)-4-amino-5-oxopentanoate = 5-aminolevulinate. Its pathway is porphyrin-containing compound metabolism; protoporphyrin-IX biosynthesis; 5-aminolevulinate from L-glutamyl-tRNA(Glu): step 2/2. This is Glutamate-1-semialdehyde 2,1-aminomutase 2 from Bacillus pumilus (strain SAFR-032).